Consider the following 937-residue polypeptide: Molybdenum cofactor sulfurase (937 aa).

Lysine 237 carries the N6-(pyridoxal phosphate)lysine modification. Residue cysteine 397 is part of the active site. Disordered stretches follow at residues glycine 633–leucine 710, proline 756–proline 795, and lysine 897–glycine 921. Positions methionine 638–glutamine 652 are enriched in basic residues. Residues threonine 682–serine 935 enclose the MOSC domain. Low complexity predominate over residues proline 756–asparagine 767. The segment covering threonine 900–glycine 921 has biased composition (gly residues).

The protein belongs to the class-V pyridoxal-phosphate-dependent aminotransferase family. MOCOS subfamily. The cofactor is pyridoxal 5'-phosphate.

It catalyses the reaction Mo-molybdopterin + L-cysteine + AH2 = thio-Mo-molybdopterin + L-alanine + A + H2O. It functions in the pathway cofactor biosynthesis; molybdopterin biosynthesis. Its function is as follows. Sulfurates the molybdenum cofactor. Sulfation of molybdenum is essential for xanthine dehydrogenase (XDH) and aldehyde oxidase (ADO) enzymes in which molybdenum cofactor is liganded by 1 oxygen and 1 sulfur atom in active form. The sequence is that of Molybdenum cofactor sulfurase (nit-13) from Neurospora crassa (strain ATCC 24698 / 74-OR23-1A / CBS 708.71 / DSM 1257 / FGSC 987).